We begin with the raw amino-acid sequence, 407 residues long: Probable tRNA sulfurtransferase (407 aa).

Positions 61–165 (NEITYRLSKI…LDAIYMYEEV (105 aa)) constitute a THUMP domain. Residues 183–184 (ML), 208–209 (HF), Arg-265, Gly-287, and Gln-296 contribute to the ATP site.

Belongs to the ThiI family.

The protein localises to the cytoplasm. The enzyme catalyses [ThiI sulfur-carrier protein]-S-sulfanyl-L-cysteine + a uridine in tRNA + 2 reduced [2Fe-2S]-[ferredoxin] + ATP + H(+) = [ThiI sulfur-carrier protein]-L-cysteine + a 4-thiouridine in tRNA + 2 oxidized [2Fe-2S]-[ferredoxin] + AMP + diphosphate. The catalysed reaction is [ThiS sulfur-carrier protein]-C-terminal Gly-Gly-AMP + S-sulfanyl-L-cysteinyl-[cysteine desulfurase] + AH2 = [ThiS sulfur-carrier protein]-C-terminal-Gly-aminoethanethioate + L-cysteinyl-[cysteine desulfurase] + A + AMP + 2 H(+). Its pathway is cofactor biosynthesis; thiamine diphosphate biosynthesis. In terms of biological role, catalyzes the ATP-dependent transfer of a sulfur to tRNA to produce 4-thiouridine in position 8 of tRNAs, which functions as a near-UV photosensor. Also catalyzes the transfer of sulfur to the sulfur carrier protein ThiS, forming ThiS-thiocarboxylate. This is a step in the synthesis of thiazole, in the thiamine biosynthesis pathway. The sulfur is donated as persulfide by IscS. This Staphylococcus aureus (strain N315) protein is Probable tRNA sulfurtransferase.